The following is a 600-amino-acid chain: Jacalin-related lectin 18 (600 aa).

Jacalin-type lectin domains are found at residues 12 to 158 (TQRL…YFTC), 161 to 303 (PTRM…YFTT), 304 to 447 (SPFI…YFRL), and 454 to 597 (GEKV…HVLP).

This sequence belongs to the jacalin lectin family.

The polypeptide is Jacalin-related lectin 18 (JAL18) (Arabidopsis thaliana (Mouse-ear cress)).